Here is a 201-residue protein sequence, read N- to C-terminus: MAEKFIKHTGLVVPLDAANVDTDAIIPKQFLQKVTRTGFGAHLFNDWRFLDEKGQQPNPDFVLNFPQYQGASILLARENFGCGSSREHAPWALTDYGFKVVIAPSFADIFYGNSFNNQLLPVKLSDAEVDELFALVKANPGIHFDVDLEAQEVKAGEKTYRFTIDAFRRHCMMNGLDSIGLTLQHDDAIAAYEAKQPAFMR.

Belongs to the LeuD family. LeuD type 1 subfamily. Heterodimer of LeuC and LeuD.

It catalyses the reaction (2R,3S)-3-isopropylmalate = (2S)-2-isopropylmalate. It participates in amino-acid biosynthesis; L-leucine biosynthesis; L-leucine from 3-methyl-2-oxobutanoate: step 2/4. Catalyzes the isomerization between 2-isopropylmalate and 3-isopropylmalate, via the formation of 2-isopropylmaleate. The protein is 3-isopropylmalate dehydratase small subunit of Shigella dysenteriae serotype 1 (strain Sd197).